Consider the following 313-residue polypeptide: Ubiquinone biosynthesis protein COQ4, mitochondrial (313 aa).

His197, Asp198, His201, and Glu213 together coordinate Zn(2+). The interval 290-313 is disordered; it reads QPPDLRELRRKQKKLPEPERENAN. Basic and acidic residues predominate over residues 303-313; that stretch reads KLPEPERENAN.

This sequence belongs to the COQ4 family. In terms of assembly, component of a multi-subunit COQ enzyme complex, composed of at least COQ3, COQ4, COQ5, COQ6, COQ7 and COQ9. The cofactor is Zn(2+).

It is found in the mitochondrion inner membrane. The enzyme catalyses a 4-hydroxy-3-methoxy-5-(all-trans-polyprenyl)benzoate + H(+) = a 2-methoxy-6-(all-trans-polyprenyl)phenol + CO2. Its pathway is cofactor biosynthesis; ubiquinone biosynthesis. Functionally, lyase that catalyzes the C1-decarboxylation of 4-hydroxy-3-methoxy-5-(all-trans-polyprenyl)benzoic acid into 2-methoxy-6-(all-trans-polyprenyl)phenol during ubiquinone biosynthesis. In Meyerozyma guilliermondii (strain ATCC 6260 / CBS 566 / DSM 6381 / JCM 1539 / NBRC 10279 / NRRL Y-324) (Yeast), this protein is Ubiquinone biosynthesis protein COQ4, mitochondrial.